The sequence spans 631 residues: ATP-dependent RNA helicase mrh4, mitochondrial (631 aa).

The N-terminal 45 residues, 1 to 45, are a transit peptide targeting the mitochondrion; the sequence is MNRLGRLPLPLPPSVCLFCQSRATTPLPPSLQATRSMATARLRRR. The tract at residues 68-111 is disordered; it reads KERFGPFAGMNQTEARIRDKPRTRSRAAQKRSGEPEEDSQKESP. Residues 98–108 show a composition bias toward basic and acidic residues; the sequence is RSGEPEEDSQK. The Q motif signature appears at 141-174; sequence TSFDQFQLLPVVRNSISSQALPGLVDVTPTPIQR. The span at 180 to 193 shows a compositional bias: basic and acidic residues; the sequence is LLEEPKTEKKPTKA. The disordered stretch occupies residues 180-199; the sequence is LLEEPKTEKKPTKADDDEPQ. Positions 194-406 constitute a Helicase ATP-binding domain; it reads DDDEPQYDQY…RKRYPDIKRL (213 aa). Position 207–214 (207–214) interacts with ATP; the sequence is AETGSGKT. The disordered stretch occupies residues 229-249; the sequence is EARDKELEKKEQEEKAREREE. The short motif at 353–356 is the DEAD box element; the sequence is DEAD. The 177-residue stretch at 455 to 631 folds into the Helicase C-terminal domain; it reads GPYASYVAPK…EGMFRGQALI (177 aa).

Belongs to the DEAD box helicase family. MRH4 subfamily.

Its subcellular location is the mitochondrion. The enzyme catalyses ATP + H2O = ADP + phosphate + H(+). In terms of biological role, ATP-binding RNA helicase involved in mitochondrial RNA metabolism. Required for maintenance of mitochondrial DNA. The protein is ATP-dependent RNA helicase mrh4, mitochondrial (mrh4) of Neosartorya fischeri (strain ATCC 1020 / DSM 3700 / CBS 544.65 / FGSC A1164 / JCM 1740 / NRRL 181 / WB 181) (Aspergillus fischerianus).